Here is a 516-residue protein sequence, read N- to C-terminus: Probable serine/threonine-protein kinase WNK3 (516 aa).

A Protein kinase domain is found at 22–280 (GRYKEVLGKG…AKELLDDPFL (259 aa)). Residues 102–105 (TEVF) and Lys-152 contribute to the ATP site. The active-site Proton acceptor is Asp-169. Residues 426–451 (SSPKAGAGDSRSPFAPRSNSKLSSAQ) are disordered. Residues 442–451 (RSNSKLSSAQ) show a composition bias toward polar residues. Residues 457-490 (EVGVIVEKLESLLRKQREEIEEMQRDQERIVTEF) are a coiled coil.

The protein belongs to the protein kinase superfamily. Ser/Thr protein kinase family. WNK subfamily.

It carries out the reaction L-seryl-[protein] + ATP = O-phospho-L-seryl-[protein] + ADP + H(+). The catalysed reaction is L-threonyl-[protein] + ATP = O-phospho-L-threonyl-[protein] + ADP + H(+). Functionally, may regulate flowering time by modulating the photoperiod pathway. This Arabidopsis thaliana (Mouse-ear cress) protein is Probable serine/threonine-protein kinase WNK3 (WNK3).